The chain runs to 512 residues: MSKRVVIFDTTLRDGEQSPGVSLNLHEKLEIAQQLARLGVDVIEAGFPIASPGDFEAVKAVAEQVRGPVICALARANRKDIERAAEALRGAEEARIHTFIATSPIHMQHKLRMEPDKVLDTAVDAVKLAKSFTSNVEFSAEDAFRSDVGFLCRIFSAAIEAGATTINIPDTVGYATPQEFGAFIKAIINGTPNIDKAIVSVHCHNDLGLAVANTLAALENGALQVEGTINGIGERAGNASLEEVIMALYTRKPFYNLETSINKSEIYRTSRLVSNLTGMLVQPNKAIVGKNAFAHESGIHQDGVLKERTTYEIMNPEMIGIFTNNIVLGKHSGRHAFRERLKELGYSLDDEKLTKAFARFKALADRKREITDEDLVVLVEDELRAFPEAYSLEYLHITSGTVLVPTATVRLRREEENFEEASCGDGPVDAAYKAIEKITGTGARLASYAISATTAGEDSQGEVSVKLEREGRFYTGRGVDTDIIVASAKAYLNAVNKIVFDGLPKAKTERAV.

The Pyruvate carboxyltransferase domain occupies 5 to 267 (VVIFDTTLRD…ETSINKSEIY (263 aa)). Positions 14, 202, 204, and 238 each coordinate Mn(2+). The tract at residues 391–512 (SLEYLHITSG…LPKAKTERAV (122 aa)) is regulatory domain.

It belongs to the alpha-IPM synthase/homocitrate synthase family. LeuA type 1 subfamily. In terms of assembly, homodimer. The cofactor is Mn(2+).

The protein localises to the cytoplasm. It catalyses the reaction 3-methyl-2-oxobutanoate + acetyl-CoA + H2O = (2S)-2-isopropylmalate + CoA + H(+). It participates in amino-acid biosynthesis; L-leucine biosynthesis; L-leucine from 3-methyl-2-oxobutanoate: step 1/4. Functionally, catalyzes the condensation of the acetyl group of acetyl-CoA with 3-methyl-2-oxobutanoate (2-ketoisovalerate) to form 3-carboxy-3-hydroxy-4-methylpentanoate (2-isopropylmalate). The polypeptide is 2-isopropylmalate synthase (Heliobacterium modesticaldum (strain ATCC 51547 / Ice1)).